A 1175-amino-acid polypeptide reads, in one-letter code: Major DNA-binding protein (1175 aa).

A zinc finger lies at 496 to 509 (CSLCDRASRPACAH). Residues 825–826 (FW) carry the Required for filament formation motif. A required for nuclear localization region spans residues 1151-1175 (KRPPPEDDLFDMGAPPEKRLTFDML).

The protein belongs to the herpesviridae major DNA-binding protein family. As to quaternary structure, homooligomers. Forms double-helical filaments necessary for the formation of replication compartments within the host nucleus. Interacts with the origin-binding protein. Interacts with the helicase primase complex; this interaction stimulates primer synthesis activity of the helicase-primase complex. Interacts with the DNA polymerase. Interacts with the alkaline exonuclease; this interaction increases its nuclease processivity.

The protein resides in the host nucleus. Functionally, plays several crucial roles in viral infection. Participates in the opening of the viral DNA origin to initiate replication by interacting with the origin-binding protein. May disrupt loops, hairpins and other secondary structures present on ssDNA to reduce and eliminate pausing of viral DNA polymerase at specific sites during elongation. Promotes viral DNA recombination by performing strand-transfer, characterized by the ability to transfer a DNA strand from a linear duplex to a complementary single-stranded DNA circle. Can also catalyze the renaturation of complementary single strands. Additionally, reorganizes the host cell nucleus, leading to the formation of prereplicative sites and replication compartments. This process is driven by the protein which can form double-helical filaments in the absence of DNA. The chain is Major DNA-binding protein from Suid herpesvirus 1 (SuHV-1).